The sequence spans 293 residues: Ribonuclease HIII (293 aa).

The region spanning 78–293 (LPLIGTDEVG…TEKAKKRLER (216 aa)) is the RNase H type-2 domain. 3 residues coordinate a divalent metal cation: D84, E85, and D187.

It belongs to the RNase HII family. RnhC subfamily. Mn(2+) is required as a cofactor. The cofactor is Mg(2+).

The protein resides in the cytoplasm. It catalyses the reaction Endonucleolytic cleavage to 5'-phosphomonoester.. Functionally, endonuclease that specifically degrades the RNA of RNA-DNA hybrids. The sequence is that of Ribonuclease HIII (rnhC) from Streptococcus pneumoniae serotype 4 (strain ATCC BAA-334 / TIGR4).